The chain runs to 103 residues: L-rhamnose mutarotase (103 aa).

Y18 is a substrate binding site. The Proton donor role is filled by H22. Residues Y41 and 76–77 contribute to the substrate site; that span reads WW.

This sequence belongs to the rhamnose mutarotase family. Homodimer.

The protein localises to the cytoplasm. The catalysed reaction is alpha-L-rhamnose = beta-L-rhamnose. The protein operates within carbohydrate metabolism; L-rhamnose metabolism. Its function is as follows. Involved in the anomeric conversion of L-rhamnose. The protein is L-rhamnose mutarotase of Enterococcus faecalis (strain ATCC 700802 / V583).